A 374-amino-acid chain; its full sequence is O-methyltransferase 16 (374 aa).

The S-adenosyl-L-homocysteine site is built by Ser195, Gly219, Asp242, Asp262, and Lys276. Asp242 lines the S-adenosyl-L-methionine pocket. The Proton acceptor role is filled by His280.

Belongs to the class I-like SAM-binding methyltransferase superfamily. Cation-independent O-methyltransferase family. As to quaternary structure, homodimer. Expressed mainly in vasculature and cortex tissues at low levels.

It catalyses the reaction dopamine + S-adenosyl-L-methionine = 4-methoxytyramine + S-adenosyl-L-homocysteine + H(+). The protein operates within aromatic compound metabolism. Its pathway is alkaloid biosynthesis. Its function is as follows. O-methyltransferase participating in the biosynthesis of natural products derived from phenylethylamine, including mescaline, a natural hallucinogen potentially used in psychotherapeutic treatments. Catalyzes the O-methylation of dopamine to produce 4-methoxytyramine. This Lophophora williamsii (Peyote) protein is O-methyltransferase 16.